We begin with the raw amino-acid sequence, 147 residues long: Cytochrome c-type biogenesis protein CcmE (147 aa).

Residues 1–9 (MKSLKKKRR) lie on the Cytoplasmic side of the membrane. Residues 10 to 30 (IQILVAAAVALVLAVGLIGYG) form a helical; Signal-anchor for type II membrane protein membrane-spanning segment. Topologically, residues 31-147 (FRDGINLYRS…EQGVYQEPNS (117 aa)) are periplasmic. Residues histidine 123 and tyrosine 127 each contribute to the heme site.

This sequence belongs to the CcmE/CycJ family.

Its subcellular location is the cell inner membrane. Functionally, heme chaperone required for the biogenesis of c-type cytochromes. Transiently binds heme delivered by CcmC and transfers the heme to apo-cytochromes in a process facilitated by CcmF and CcmH. This is Cytochrome c-type biogenesis protein CcmE from Paracoccus denitrificans (strain Pd 1222).